Here is a 437-residue protein sequence, read N- to C-terminus: Chloride intracellular channel protein 5 (437 aa).

The segment covering 1–14 (MNDENYSTTIYNRV) has biased composition (polar residues). The segment at 1-197 (MNDENYSTTI…VSEGNESASA (197 aa)) is disordered. Basic and acidic residues predominate over residues 34–45 (DEVHEDVRREDN). 4 repeat units span residues 118–125 (QSDSEEPQ), 126–133 (ASDPEEPQ), 134–141 (ASDPEEPQ), and 142–149 (GPDPEEPQ). The 4 X 8 AA tandem repeats of [AGQ]-[SP]-D-[PS]-E-E-P-Q stretch occupies residues 118–149 (QSDSEEPQASDPEEPQASDPEEPQGPDPEEPQ). A compositionally biased stretch (acidic residues) spans 121–157 (SEEPQASDPEEPQASDPEEPQGPDPEEPQENGNEMEA). A compositionally biased stretch (polar residues) spans 161–184 (SPSSFTIQNSRAFSTREISPTSYS). A G-site motif is present at residues 217-220 (CPFS). Residues 219-239 (FSQRLFMILWLKGVVFNVTTV) form a helical membrane-spanning segment. Residues 263–427 (NGDVKTDVNK…AADSEIELAY (165 aa)) enclose the GST C-terminal domain.

It belongs to the chloride channel CLIC family. In terms of assembly, component of a multimeric complex consisting of several cytoskeletal proteins, including actin, ezrin, alpha-actinin, gelsolin, and IQGAP1. Interacts with AKAP9. Interacts with TPRN. TPRN, CLIC5 and PTPQR form concentric rings at the base of stereocilia and may form a complex. Interacts with EZR, MYO6 and RDX; the proteins may work together as a complex to stabilize linkages between the plasma membrane and subjacent actin cytoskeleton at the stereocilium base. Phosphorylated. Expressed in most tissues. Higher levels found in kidney, heart, skeletal muscle, T84 and PANC-1 cells.

It localises to the golgi apparatus. The protein localises to the cytoplasm. Its subcellular location is the cytoskeleton. The protein resides in the microtubule organizing center. It is found in the centrosome. It localises to the cell cortex. The protein localises to the membrane. Its subcellular location is the apical cell membrane. The protein resides in the mitochondrion. It is found in the cell projection. It localises to the stereocilium. The enzyme catalyses Na(+)(in) = Na(+)(out). The catalysed reaction is K(+)(in) = K(+)(out). It catalyses the reaction chloride(in) = chloride(out). Inhibited by F-actin. In terms of biological role, in the soluble state, catalyzes glutaredoxin-like thiol disulfide exchange reactions with reduced glutathione as electron donor. Can insert into membranes and form non-selective ion channels almost equally permeable to Na(+), K(+) and Cl(-). Required for normal hearing. It is necessary for the formation of stereocilia in the inner ear and normal development of the organ of Corti. May play a role in the regulation of transepithelial ion absorption and secretion. Is required for the development and/or maintenance of the proper glomerular endothelial cell and podocyte architecture. Plays a role in formation of the lens suture in the eye, which is important for normal optical properties of the lens. In Bos taurus (Bovine), this protein is Chloride intracellular channel protein 5 (CLIC5).